The chain runs to 201 residues: MNPEYDYLFKLLLIGDSGVGKSCLLLRFADDTYTESYISTIGVDFKIRTIELDGKTIKLQIWDTAGQERFRTITSSYYRGAHGIIVVYDVTDRESYANVKQWLQEIDRYASENVNKLLVGNKSDLTTKKVVDNTTAKEFADSLGIPFLETSAKNATNVEQAFMTMAAEIKKRMGPGAASGGERPNLKIDSTPVKPAGGGCC.

Met1 carries the post-translational modification N-acetylmethionine. Residues Ser17, Gly18, Val19, Gly20, Lys21, Ser22, Cys23, Tyr33, Thr34, Glu35, Ser36, Ser39, and Thr40 each coordinate GTP. A Mg(2+)-binding site is contributed by Ser22. The Switch 1 signature appears at 30–45 (DDTYTESYISTIGVDF). Mg(2+) is bound by residues Thr40 and Asp63. The switch 2 region; required for interaction with REP1/CHM stretch occupies residues 64–83 (TAGQERFRTITSSYYRGAHG). Residues 65-80 (AGQERFRTITSSYYRG) carry the Switch 2 motif. Gly66, Asn121, Lys122, Asp124, Ser151, Ala152, and Lys153 together coordinate GTP. Positions 174–201 (GPGAASGGERPNLKIDSTPVKPAGGGCC) are disordered. Residues Cys200 and Cys201 are each lipidated (S-geranylgeranyl cysteine). A Cysteine methyl ester modification is found at Cys201.

It belongs to the small GTPase superfamily. Rab family. In terms of assembly, interacts with MICAL1 and MICAL2. Interacts (in GTP-bound form) with MICALCL, MICAL1 and MILCAL3. Interacts with GDI1; the interaction requires the GDP-bound state. Interacts with CHM/REP1; the interaction requires the GDP-bound form and is necessary for prenylation by GGTase II. Interacts with RabGAP TBC1D20. Interacts (in GDP-bound form) with lipid phosphatase MTMR6 (via GRAM domain); the interaction regulates MTMR6 recruitment to the endoplasmic reticulum-Golgi intermediate compartment. Interacts (in GDP-bound form) with lipid phosphatase MTMR7. The cofactor is Mg(2+). Prenylated; by GGTase II, only after interaction of the substrate with Rab escort protein 1 (REP1).

The protein resides in the cytoplasm. Its subcellular location is the membrane. It localises to the preautophagosomal structure membrane. The protein localises to the perinuclear region. The enzyme catalyses GTP + H2O = GDP + phosphate + H(+). Regulated by guanine nucleotide exchange factors (GEFs) which promote the exchange of bound GDP for free GTP. Regulated by GTPase activating proteins (GAPs) including TBC1D20 which increases the GTP hydrolysis activity. Inhibited by GDP dissociation inhibitors (GDIs). Functionally, the small GTPases Rab are key regulators of intracellular membrane trafficking, from the formation of transport vesicles to their fusion with membranes. Rabs cycle between an inactive GDP-bound form and an active GTP-bound form that is able to recruit to membranes different set of downstream effectors directly responsible for vesicle formation, movement, tethering and fusion. Plays a role in the initial events of the autophagic vacuole development which take place at specialized regions of the endoplasmic reticulum. Regulates vesicular transport between the endoplasmic reticulum and successive Golgi compartments. Required to modulate the compacted morphology of the Golgi. Promotes the recruitment of lipid phosphatase MTMR6 to the endoplasmic reticulum-Golgi intermediate compartment. The sequence is that of Ras-related protein Rab-1B (RAB1B) from Macaca fascicularis (Crab-eating macaque).